The following is a 398-amino-acid chain: Stimulator of interferon genes protein (398 aa).

Topologically, residues 1-16 (MSVMGEDALVPRARSR) are cytoplasmic. The helical transmembrane segment at 17 to 37 (LPVMCAAGLGFLTLAVAWLLD) threads the bilayer. The Lumenal portion of the chain corresponds to 38-44 (SDKFSER). A helical transmembrane segment spans residues 45-65 (AGIIAFGLMLERFIYCICLLA). At 66 to 91 (EELLFHSRQRYHGRMSEIFRACFRGS) the chain is on the cytoplasmic side. Residues 92–112 (GILGMCAIFLMLMLGGVSFSV) traverse the membrane as a helical segment. Residues 113–120 (KQWSHFNL) lie on the Lumenal side of the membrane. The chain crosses the membrane as a helical span at residues 121 to 141 (MCAGYMLLNSLGVLGPAPVEI). The Cytoplasmic segment spans residues 142–398 (SEICEAKKMN…FNPSSAMKQN (257 aa)). The tract at residues 150 to 331 (MNVAHGLAWS…QNLKQQDGEI (182 aa)) is cyclic dinucleotide-binding domain (CBD). 2',3'-cGAMP contacts are provided by Ser-159, Tyr-164, Arg-230, and Thr-254. 3',3'-c-di-GMP is bound by residues Ser-159, Tyr-164, 230 to 233 (RSYT), and Thr-254. The disordered stretch occupies residues 375-398 (PQSLRSEPVETTDYFNPSSAMKQN). Polar residues predominate over residues 387–398 (DYFNPSSAMKQN).

It belongs to the STING family. As to quaternary structure, homodimer; forms a homodimer in absence of cyclic nucleotide (c-di-GMP or cGAMP). Homotetramer; in presence of cyclic nucleotide (c-di-GMP or cGAMP), forms tetramers and higher-order oligomers through side-by-side packing. Interacts (when phosphorylated) with irf3; following activation and phosphorylation by tbk1, recruits irf3. Post-translationally, phosphorylation by TBK1 leads to activation and production of IFN-beta. Following cyclic nucleotide (c-di-GMP or cGAMP)-binding, activation and translocation from the endoplasmic reticulum, STING1 is phosphorylated by tbk1, leading to recruitment of the transcription factor irf3 to induce type-I interferons and other cytokines.

Its subcellular location is the endoplasmic reticulum membrane. The protein localises to the cytoplasm. It is found in the perinuclear region. It localises to the endoplasmic reticulum-Golgi intermediate compartment membrane. The protein resides in the golgi apparatus membrane. Its subcellular location is the cytoplasmic vesicle. The protein localises to the autophagosome membrane. It catalyses the reaction H(+)(in) = H(+)(out). Its function is as follows. Facilitator of innate immune signaling that acts as a sensor of cytosolic DNA from bacteria and viruses and promotes the production of type I interferon (IFN-alpha and IFN-beta). Innate immune response is triggered in response to non-CpG double-stranded DNA from viruses and bacteria delivered to the cytoplasm. Acts by binding cyclic dinucleotides: recognizes and binds cyclic di-GMP (c-di-GMP), a second messenger produced by bacteria, and cyclic GMP-AMP (cGAMP), a messenger produced by CGAS in response to DNA virus in the cytosol. Upon binding of c-di-GMP or cGAMP, STING1 oligomerizes and is able to activate both NF-kappa-B and irf3 transcription pathways to induce expression of type I interferon and exert a potent anti-viral state. Exhibits 2',3' phosphodiester linkage-specific ligand recognition: can bind both 2'-3' linked cGAMP and 3'-3' linked cGAMP but is preferentially activated by 2'-3' linked cGAMP. In addition to promote the production of type I interferons, plays a direct role in autophagy. Following cGAMP-binding, STING1 buds from the endoplasmic reticulum into COPII vesicles, which then form the endoplasmic reticulum-Golgi intermediate compartment (ERGIC). The ERGIC serves as the membrane source for LC3 lipidation, leading to formation of autophagosomes that target cytosolic DNA or DNA viruses for degradation by the lysosome. Promotes autophagy by acting as a proton channel that directs proton efflux from the Golgi to facilitate LC3 lipidation. The autophagy- and interferon-inducing activities can be uncoupled and autophagy induction is independent of TBK1 phosphorylation. The sequence is that of Stimulator of interferon genes protein from Danio rerio (Zebrafish).